Consider the following 268-residue polypeptide: Tryptophan synthase alpha chain (268 aa).

Active-site proton acceptor residues include E40 and D51.

The protein belongs to the TrpA family. As to quaternary structure, tetramer of two alpha and two beta chains.

It carries out the reaction (1S,2R)-1-C-(indol-3-yl)glycerol 3-phosphate + L-serine = D-glyceraldehyde 3-phosphate + L-tryptophan + H2O. Its pathway is amino-acid biosynthesis; L-tryptophan biosynthesis; L-tryptophan from chorismate: step 5/5. Its function is as follows. The alpha subunit is responsible for the aldol cleavage of indoleglycerol phosphate to indole and glyceraldehyde 3-phosphate. The polypeptide is Tryptophan synthase alpha chain (Geobacillus kaustophilus (strain HTA426)).